A 444-amino-acid polypeptide reads, in one-letter code: Methylenetetrahydrofolate--tRNA-(uracil-5-)-methyltransferase TrmFO (444 aa).

10–15 (GAGLAG) contributes to the FAD binding site.

The protein belongs to the MnmG family. TrmFO subfamily. FAD serves as cofactor.

The protein resides in the cytoplasm. It catalyses the reaction uridine(54) in tRNA + (6R)-5,10-methylene-5,6,7,8-tetrahydrofolate + NADH + H(+) = 5-methyluridine(54) in tRNA + (6S)-5,6,7,8-tetrahydrofolate + NAD(+). The catalysed reaction is uridine(54) in tRNA + (6R)-5,10-methylene-5,6,7,8-tetrahydrofolate + NADPH + H(+) = 5-methyluridine(54) in tRNA + (6S)-5,6,7,8-tetrahydrofolate + NADP(+). Functionally, catalyzes the folate-dependent formation of 5-methyl-uridine at position 54 (M-5-U54) in all tRNAs. This chain is Methylenetetrahydrofolate--tRNA-(uracil-5-)-methyltransferase TrmFO, found in Streptococcus pneumoniae (strain ATCC 700669 / Spain 23F-1).